The sequence spans 1351 residues: MPKIFLIKNRLHQQQQRLLESQNLLQHKNQDDERLVPPLSPSGSGSGPSPTPTSQPPPEPQGQGQQVLGQVPDSDQQPLSLTRKRFHHRRHYFGQSRHSLDHLNQNQSPNPNANANPNQIQNPAELEVECATGQVQNENFAAELLQRLTPNTATTAQNNIVNNLVNNSRAATSVLATKDCTIENSPISIPKNQRAEDEEEQEDQEKEKPAEREREKSDERTEQVEKEERVEREEEEDDEVDVGVEAPRPRFYNTGVVLTQAQRKEYPQEPKDLSLTIAKSSPASPHIHSDSESDSDSDGGCKLIVDEKPPLPVIKPLSLRLRSTPPPADQRPSPPPPRDPAPAVRCSVIQRAPQSQLPTSRAGFLLPPLDQLGPEQQEPIDYHVPKRRSPSYDSDEELNARRLERARQVREARRRSTILAARVLLAQSQRLNPRLVRSLPGILAAAAGHGRNSSSSSGAAGQGFQSSGFGSQNSGSGSSSGNQNAGSGAGSPGSGAGGGGGMGGGRDGRGNYGPNSPPTGALPPFYESLKSGQQSTASNNTGQSPGANHSHFNANPANFLQNAAAAAYIMSAGSGGGGCTGNGGGGASGPGGGPSANSGGGGGGGGGNGYINCGGVGGPNNSLDGNNLLNFASVSNYNESNSKFHNHHHHHQHNNNNNNNGGQTSMMGHPFYGGNPSAYGIILKDEPDIEYDEAKIDIGTFAQNIIQATMGSSGQFNASAYEDAIMSDLASSGQCPNGAVDPLQFTATLMLSSQTDHLLEQLSDAVDLSSFLQRSCVDDEESTSPRQDFELVSTPSLTPDSVTPVEQHNTNTTQLDVLHENLLTQLTHNIVRGGSNQQQQHHQQHGVQQQQQQQHSVQQQQQHNVQQQHGVQQQHVQQQPPPSYQHATRGLMMQQQPQHGGYQQQAAIMSQQQQQLLSQQQQQSHHQQQQQQQHAAAYQQHNIYAQQQQQQQQQHHQQQQQQQHHHFHHQQQQQPQPQSHHSHHHGHGHDNSNMSLPSPTAAAAAAAAAAAAAAAAAAHLQRPMSSSSSSGGTNSSNSSGGSSNSPLLDANAAAAAAAALLDTKPLIQSLGLPPDLQLEFVNGGHGIKNPLAVENAHGGHHRIRNIDCIDDLSKHGHHSQHQQQQGSPQQQNMQQSVQQQSVQQQQSLQQQQQQQHHQHHSNSSASSNASSHGSAEALCMGSSGGANEDSSSGNNKFVCRVCMKTFSLQRLLNRHMKCHSDIKRYLCTFCGKGFNDTFDLKRHTRTHTGVRPYKCNLCEKSFTQRCSLESHCQKVHSVQHQYAYKERRAKMYVCEECGHTTCEPEVHYLHLKNNHPFSPALLKFYDKRHFKFTNSQFANNLLGQLPMPVHN.

The segment at 1 to 31 is required for Ubr3 binding and tal-dependent proteolytic processing; that stretch reads MPKIFLIKNRLHQQQQRLLESQNLLQHKNQD. Disordered stretches follow at residues 22–77, 100–119, 184–397, 447–554, 640–665, 778–807, 834–887, 916–1000, 1023–1044, and 1113–1192; these read QNLL…SDQQ, LDHL…NPNQ, NSPI…SDEE, AGHG…HFNA, SNSK…GQTS, DDEE…PVEQ, GSNQ…YQHA, LLSQ…PSPT, PMSS…GSSN, and SKHG…DSSS. The span at 49–60 shows a compositional bias: pro residues; that stretch reads SPTPTSQPPPEP. 2 stretches are compositionally biased toward low complexity: residues 61-72 and 104-119; these read QGQGQQVLGQVP and NQNQ…NPNQ. Residues 205–232 are compositionally biased toward basic and acidic residues; sequence EKEKPAEREREKSDERTEQVEKEERVER. The segment covering 233–242 has biased composition (acidic residues); that stretch reads EEEEDDEVDV. Over residues 262–272 the composition is skewed to basic and acidic residues; it reads QRKEYPQEPKD. Positions 324–340 are enriched in pro residues; sequence TPPPADQRPSPPPPRDP. Residues 447 to 486 show a composition bias toward low complexity; the sequence is AGHGRNSSSSSGAAGQGFQSSGFGSQNSGSGSSSGNQNAG. A compositionally biased stretch (gly residues) spans 487–505; the sequence is SGAGSPGSGAGGGGGMGGG. The segment covering 530–552 has biased composition (polar residues); sequence KSGQQSTASNNTGQSPGANHSHF. The span at 644-653 shows a compositional bias: basic residues; the sequence is FHNHHHHHQH. Residues 793-807 show a composition bias toward polar residues; that stretch reads STPSLTPDSVTPVEQ. Composition is skewed to low complexity over residues 835–878, 916–962, 970–979, 1025–1044, and 1121–1175; these read SNQQ…HVQQ, LLSQ…QQQQ, QQQQQPQPQS, SSSS…GSSN, and HQQQ…HGSA. 4 C2H2-type zinc fingers span residues 1197–1219, 1225–1247, 1253–1276, and 1292–1315; these read FVCR…MKCH, YLCT…TRTH, YKCN…QKVH, and YVCE…KNNH.

Interacts (via N-terminus) with Ubr3; the interaction is mediated by tal. Post-translationally, N-terminus is proteolytically cleaved and ubiquitinated via a tal-dependent mechanism, leading to the proteolytic degradation of the N-terminus and the production of transcriptional activator shavenbaby, a truncated form with transcriptional activator activity.

It localises to the cytoplasm. The protein localises to the nucleus. Its subcellular location is the nucleoplasm. Functionally, transcriptional regulator with essential functions in the germline and soma. Plays an essential role in regulating the formation of apical cell extensions such as denticles and aristae, and initiating cytoskeletal remodeling during epidermal differentiation. Its function is as follows. Transcriptional repressor which functions in postembryonic development. The full-length unprocessed form acts as a transcriptional repressor (Transcriptional repressor svb). In terms of biological role, transcriptional activator which initiates trichome development and also promotes tarsal joint development. Has an essential somatic role regulating the tal-dependent formation of trichomes, and initiating cytoskeletal remodeling during epidermal differentiation. Function with SoxN is required for correct denticle morphogenesis on the embryonic epidermis. SoxN and svb appear to act both independently and in conjunction with each other to activate certain genes involved in denticle morphogenesis; Svb appears to be involved in regulating denticle length whereas SoxN regulates the denticle base circumference. Also functions in the development of other apical cell extensions such as bristles. Also has an important role in tarsal joint development, repressing expression of the N ligand Dl and defining its signaling boundary. Transcriptional repressor which is specifically involved in female germline development, where it functions antagonistically to isoform D. Negatively regulates expression of otu and may also have autoregulatory activity. Negatively regulates expression of piwi in the primordial germ cells (PGCs). Functionally, transcriptional activator which is specifically involved in female germline development, where it functions antagonistically to isoform C. Necessary and sufficient for normal oogenesis. Required in the primordial germ cells (PGCs) for normal development of male and female germline cells. Plays a role in germline sex determination. Binds the promoter DNA and positively regulates the transcription of the otu gene in a stage-specific manner. May have autoregulatory activity. This chain is Transcriptional regulator ovo, found in Drosophila melanogaster (Fruit fly).